A 257-amino-acid polypeptide reads, in one-letter code: Deoxyribose-phosphate aldolase (257 aa).

Asp102 serves as the catalytic Proton donor/acceptor. Residue Lys166 is the Schiff-base intermediate with acetaldehyde of the active site. Lys198 (proton donor/acceptor) is an active-site residue.

It belongs to the DeoC/FbaB aldolase family. DeoC type 2 subfamily.

The protein localises to the cytoplasm. The enzyme catalyses 2-deoxy-D-ribose 5-phosphate = D-glyceraldehyde 3-phosphate + acetaldehyde. Its pathway is carbohydrate degradation; 2-deoxy-D-ribose 1-phosphate degradation; D-glyceraldehyde 3-phosphate and acetaldehyde from 2-deoxy-alpha-D-ribose 1-phosphate: step 2/2. Functionally, catalyzes a reversible aldol reaction between acetaldehyde and D-glyceraldehyde 3-phosphate to generate 2-deoxy-D-ribose 5-phosphate. The protein is Deoxyribose-phosphate aldolase of Shewanella piezotolerans (strain WP3 / JCM 13877).